The chain runs to 156 residues: UPF0225 protein PFLU_1319 (156 aa).

This sequence belongs to the UPF0225 family.

This Pseudomonas fluorescens (strain SBW25) protein is UPF0225 protein PFLU_1319.